Here is a 206-residue protein sequence, read N- to C-terminus: Protein GrpE (206 aa).

Over residues 1-17 (MSNESIKAEQDLIHEGV) the composition is skewed to basic and acidic residues. Residues 1–20 (MSNESIKAEQDLIHEGVESE) are disordered.

It belongs to the GrpE family. Homodimer.

The protein resides in the cytoplasm. In terms of biological role, participates actively in the response to hyperosmotic and heat shock by preventing the aggregation of stress-denatured proteins, in association with DnaK and GrpE. It is the nucleotide exchange factor for DnaK and may function as a thermosensor. Unfolded proteins bind initially to DnaJ; upon interaction with the DnaJ-bound protein, DnaK hydrolyzes its bound ATP, resulting in the formation of a stable complex. GrpE releases ADP from DnaK; ATP binding to DnaK triggers the release of the substrate protein, thus completing the reaction cycle. Several rounds of ATP-dependent interactions between DnaJ, DnaK and GrpE are required for fully efficient folding. The polypeptide is Protein GrpE (Shewanella oneidensis (strain ATCC 700550 / JCM 31522 / CIP 106686 / LMG 19005 / NCIMB 14063 / MR-1)).